The primary structure comprises 63 residues: Protein D-63 (63 aa).

In terms of assembly, homodimer.

Functionally, this protein may be involved in virus assembly. The protein is Protein D-63 of Saccharolobus solfataricus (Sulfolobus solfataricus).